A 462-amino-acid polypeptide reads, in one-letter code: GTPase Der (462 aa).

2 EngA-type G domains span residues 3–170 (ITIA…TSQK) and 201–372 (IKIA…FNSI). Residues 9–16 (GRTNVGKS), 57–61 (DTPGI), 122–125 (NKIE), 207–214 (GKPNVGKS), 254–258 (DTAGI), and 319–322 (NKND) contribute to the GTP site. The region spanning 373-457 (KKIHTSKITE…SIVLYFKSSK (85 aa)) is the KH-like domain.

Belongs to the TRAFAC class TrmE-Era-EngA-EngB-Septin-like GTPase superfamily. EngA (Der) GTPase family. In terms of assembly, associates with the 50S ribosomal subunit.

In terms of biological role, GTPase that plays an essential role in the late steps of ribosome biogenesis. The polypeptide is GTPase Der (Buchnera aphidicola subsp. Baizongia pistaciae (strain Bp)).